Reading from the N-terminus, the 154-residue chain is MKTYTAKPAEIEKKWILIDAEGVVLGRLASIVAMRLRGKHKPTFTPHMDMGDNVIIINADKVQMTGDKRDAKKYYWHTGHPGGIKHRTARQVLEGAHPERVVIKAVERMISRNKLGKQQMTNLRVYAGAEHPHEAQQPEVLDVKSMNAKNTRSA.

The disordered stretch occupies residues 132–154 (PHEAQQPEVLDVKSMNAKNTRSA).

The protein belongs to the universal ribosomal protein uL13 family. Part of the 50S ribosomal subunit.

Functionally, this protein is one of the early assembly proteins of the 50S ribosomal subunit, although it is not seen to bind rRNA by itself. It is important during the early stages of 50S assembly. This is Large ribosomal subunit protein uL13 from Paracoccus denitrificans (strain Pd 1222).